The chain runs to 2070 residues: HEAT repeat-containing protein 5B (2070 aa).

3 HEAT repeats span residues 848–885 (EVRK…VVGE), 1062–1099 (VNLS…REAA), and 1290–1327 (LHLS…KFAS). Phosphoserine is present on Ser1737.

The protein belongs to the HEATR5 family. As to quaternary structure, self-associates. Component of the aftiphilin/p200/gamma-synergin complex, at least composed of AFTPH/aftiphilin, HEATR5B/p200a and SYNRG/gamma-synergin, which plays a role in the AP1G1/AP-1-mediated protein trafficking from early to recycling endosomes and between the trans-Golgi network (TGN) and endosomes. Within the complex interacts with AFTPH/aftiphilin and SYNRG/gamma-synergin; the interactions are direct. Interacts with GGA1.

Its subcellular location is the cytoplasm. It is found in the perinuclear region. It localises to the cytoplasmic vesicle. The protein localises to the clathrin-coated vesicle. Its function is as follows. Component of clathrin-coated vesicles. Component of the aftiphilin/p200/gamma-synergin complex, which plays roles in AP1G1/AP-1-mediated protein trafficking including the trafficking of transferrin from early to recycling endosomes, and the membrane trafficking of furin and the lysosomal enzyme cathepsin D between the trans-Golgi network (TGN) and endosomes. This is HEAT repeat-containing protein 5B (Heatr5b) from Mus musculus (Mouse).